The primary structure comprises 532 residues: Hepatocyte nuclear factor 1-beta-B (532 aa).

The dimerization stretch occupies residues 1-35; sequence MFTDMVSKLTSLQQELLSALLDSGVTKDVLVQALE. Residues 5 to 36 enclose the HNF-p1 domain; that stretch reads MVSKLTSLQQELLSALLDSGVTKDVLVQALED. Residues 74–95 form a disordered region; it reads TGAQGKGGKLSGDEGSEDGDDF. A POU-specific atypical domain is found at 102 to 197; sequence RELQSLNTEE…IDRQFDRVQG (96 aa). Over residues 222-231 the composition is skewed to gly residues; the sequence is SSGAAGGSGA. Disordered stretches follow at residues 222 to 245 and 500 to 532; these read SSGA…KRMR and EAGQ…LQAW. The homeobox; HNF1-type DNA-binding region spans 244–324; it reads MRRNRFKWGP…NRRKEEAFRQ (81 aa). The segment covering 505-532 has biased composition (polar residues); sequence SHPSRYSTMDSSTITHLGSSKQCPLQAW.

This sequence belongs to the HNF1 homeobox family. In terms of assembly, binds DNA as a dimer. Can form homodimer or heterodimer with HNF1-alpha. First expressed at stage 10 in the intermediate mesoderm. Expressed in rhombomere r5 by 14 hpf with expression diminishing by 18 hpf.

The protein localises to the nucleus. Functionally, transcription factor that binds to the inverted palindrome 5'-GTTAATNATTAAC-3'. Acts downstream of hnf1ba but is not required for induction of rhombomere r5/r6 gene expression in the hindbrain. This is Hepatocyte nuclear factor 1-beta-B from Danio rerio (Zebrafish).